The primary structure comprises 790 residues: Phenylalanine--tRNA ligase beta subunit (790 aa).

One can recognise a tRNA-binding domain in the interval 39-154 (PDSLNTVVTG…ADTPLGESAC (116 aa)). The region spanning 404–483 (FSPLSLSVRP…FVQKTQKILP (80 aa)) is the B5 domain. Aspartate 457, aspartate 463, glutamate 466, and glutamate 467 together coordinate Mg(2+). An FDX-ACB domain is found at 694–790 (PIYPASSRDI…KLANIGQGNS (97 aa)).

Belongs to the phenylalanyl-tRNA synthetase beta subunit family. Type 1 subfamily. In terms of assembly, tetramer of two alpha and two beta subunits. It depends on Mg(2+) as a cofactor.

It is found in the cytoplasm. The enzyme catalyses tRNA(Phe) + L-phenylalanine + ATP = L-phenylalanyl-tRNA(Phe) + AMP + diphosphate + H(+). The sequence is that of Phenylalanine--tRNA ligase beta subunit from Chlamydia trachomatis serovar A (strain ATCC VR-571B / DSM 19440 / HAR-13).